A 410-amino-acid chain; its full sequence is Peptidase T (410 aa).

Histidine 77 lines the Zn(2+) pocket. The active site involves aspartate 79. Aspartate 140 contributes to the Zn(2+) binding site. Glutamate 174 serves as the catalytic Proton acceptor. Zn(2+) is bound by residues glutamate 175, aspartate 197, and histidine 379.

This sequence belongs to the peptidase M20B family. Zn(2+) serves as cofactor.

It localises to the cytoplasm. The enzyme catalyses Release of the N-terminal residue from a tripeptide.. Its function is as follows. Cleaves the N-terminal amino acid of tripeptides. In Desulfitobacterium hafniense (strain Y51), this protein is Peptidase T.